Consider the following 346-residue polypeptide: Glycerol-1-phosphate dehydrogenase [NAD(P)+] (346 aa).

NAD(+)-binding positions include 93-97 (GSIID) and 115-118 (TTAS). Asp-120 lines the substrate pocket. Ser-124 contacts NAD(+). Asp-167 is a substrate binding site. Residues Asp-167 and His-247 each coordinate Zn(2+). Position 251 (His-251) interacts with substrate. A Zn(2+)-binding site is contributed by His-263.

The protein belongs to the glycerol-1-phosphate dehydrogenase family. It depends on Zn(2+) as a cofactor.

It localises to the cytoplasm. The catalysed reaction is sn-glycerol 1-phosphate + NAD(+) = dihydroxyacetone phosphate + NADH + H(+). The enzyme catalyses sn-glycerol 1-phosphate + NADP(+) = dihydroxyacetone phosphate + NADPH + H(+). It functions in the pathway membrane lipid metabolism; glycerophospholipid metabolism. Catalyzes the NAD(P)H-dependent reduction of dihydroxyacetonephosphate (DHAP or glycerone phosphate) to glycerol 1-phosphate (G1P). The G1P thus generated is used as the glycerophosphate backbone of phospholipids in the cellular membranes of Archaea. In Pyrococcus horikoshii (strain ATCC 700860 / DSM 12428 / JCM 9974 / NBRC 100139 / OT-3), this protein is Glycerol-1-phosphate dehydrogenase [NAD(P)+].